The sequence spans 285 residues: CCR4-NOT transcription complex subunit 7 (285 aa).

Residues Asp-40, Glu-42, Asp-161, Asp-230, and Glu-278 each contribute to the a divalent metal cation site.

Belongs to the CAF1 family. As to quaternary structure, component of the CCR4-NOT complex. Requires Mn(2+) as cofactor. The cofactor is Mg(2+). Co(2+) is required as a cofactor.

It localises to the nucleus. The protein resides in the cytoplasm. The catalysed reaction is Exonucleolytic cleavage of poly(A) to 5'-AMP.. Has 3'-5' poly(A) exoribonuclease activity for synthetic poly(A) RNA substrate. Catalytic component of the CCR4-NOT complex which is one of the major cellular mRNA deadenylases and is linked to various cellular processes including bulk mRNA degradation, miRNA-mediated repression, translational repression during translational initiation and general transcription regulation. During miRNA-mediated repression the complex also seems to act as translational repressor during translational initiation. Additional complex functions may be a consequence of its influence on mRNA expression. The sequence is that of CCR4-NOT transcription complex subunit 7 (cnot7) from Xenopus tropicalis (Western clawed frog).